The following is a 331-amino-acid chain: CRISPR-associated endonuclease Cas1 1 (331 aa).

Mn(2+) is bound by residues E161, H226, and E241.

This sequence belongs to the CRISPR-associated endonuclease Cas1 family. Homodimer, forms a heterotetramer with a Cas2 homodimer. It depends on Mg(2+) as a cofactor. Mn(2+) serves as cofactor.

In terms of biological role, CRISPR (clustered regularly interspaced short palindromic repeat), is an adaptive immune system that provides protection against mobile genetic elements (viruses, transposable elements and conjugative plasmids). CRISPR clusters contain spacers, sequences complementary to antecedent mobile elements, and target invading nucleic acids. CRISPR clusters are transcribed and processed into CRISPR RNA (crRNA). Acts as a dsDNA endonuclease. Involved in the integration of spacer DNA into the CRISPR cassette. This Methanospirillum hungatei JF-1 (strain ATCC 27890 / DSM 864 / NBRC 100397 / JF-1) protein is CRISPR-associated endonuclease Cas1 1.